Consider the following 360-residue polypeptide: Uptake hydrogenase small subunit (360 aa).

Positions 1-43 (MVETFYEVMRRQGISRRSFLKYCSLTATSLGLGPSFLPQIAHA) form a signal peptide, tat-type signal. 8 residues coordinate [4Fe-4S] cluster: Cys60, Cys63, Cys158, Cys192, His230, Cys233, Cys258, and Cys264. Positions 273, 292, and 295 each coordinate [3Fe-4S] cluster.

Belongs to the [NiFe]/[NiFeSe] hydrogenase small subunit family. As to quaternary structure, heterodimer of a large and a small subunit. [4Fe-4S] cluster is required as a cofactor. [3Fe-4S] cluster serves as cofactor. Post-translationally, predicted to be exported by the Tat system. The position of the signal peptide cleavage has been experimentally proven.

The protein localises to the cell membrane. It carries out the reaction H2 + A = AH2. In terms of biological role, this enzyme recycles the H(2) produced by nitrogenase to increase the production of ATP and to protect nitrogenase against inhibition or damage by O(2) under carbon- or phosphate-limited conditions. The chain is Uptake hydrogenase small subunit (hoxK) from Cupriavidus necator (strain ATCC 17699 / DSM 428 / KCTC 22496 / NCIMB 10442 / H16 / Stanier 337) (Ralstonia eutropha).